A 489-amino-acid polypeptide reads, in one-letter code: MINVKVLRFEPGVDEKPHLESYDIPSKEKMKVLDALQLINKMYNANIAFRSSCRAGQCGSCAVKMNGEVVLACRAEVEDGAVIEPVDLPVIKDLMVDRSEIEDKVRAMGLYLQSEARGIQRIKPEDYQDTKKLRGCIECFSCISSCPVIKESTEYAGPYFMRYISKFAFDPRDEAERAAGGVEEGLYCCTTCGKCAEVCPKELNVPGDAIEKLRAMACREGAGPLDAHRKIKKLISETGRSVDHIGKGFIESVGQNPGSRIGFFTGCLVDYRMPDVGMALLRVLREHGFEVDVPDGQVCCGSPMIRTGQLDIVEDLVERNRRALEGYDTIITVCAGCGATLKKDYPRYGVELNVLDISEFLADRIDDIKMKPVNMRVTYHDPCHLLRGQGVKLEPRKILNSIPGLEFVEMEKQGQCCGSGGGVKSGKPEIAESLGKKKAEMIRKLNVDAVITICPFCQLHIKDSLEKEGLGDVKVMNILELLDMAYSDD.

A 2Fe-2S ferredoxin-type domain is found at 2–89; it reads INVKVLRFEP…GAVIEPVDLP (88 aa). C53, C58, C61, and C73 together coordinate [2Fe-2S] cluster. 4Fe-4S ferredoxin-type domains lie at 124 to 158 and 178 to 209; these read PEDY…YAGP and AAGG…PGDA. 8 residues coordinate [4Fe-4S] cluster: C136, C139, C142, C146, C189, C192, C195, and C199.

As to quaternary structure, subunit B of the heterodimeric fumarate reductase of methanogenic Archaea, composed of subunits A (TfrA) and B (TfrB). Requires [2Fe-2S] cluster as cofactor. It depends on [4Fe-4S] cluster as a cofactor.

It localises to the cytoplasm. The catalysed reaction is coenzyme B + coenzyme M + fumarate = coenzyme M-coenzyme B heterodisulfide + succinate. Catalyzes the reduction of fumarate with reduced coenzyme M (CoM-S-H) and coenzyme B (CoB-S-H). In vitro, is able to reduces fumarate with reduced benzyl viologen, oxidize CoM-S-H and CoB-S-H to CoM-S-S-CoB with methylene blue, and reduce CoM-S-S-CoB with reduced benzyl viologen. The enzyme has specificity for the two thiol compounds as the CoB--CoM heterodisulfide reductase. The enzyme is very sensitive to oxygen. The polypeptide is Fumarate reductase (CoM/CoB) subunit B (Methanothermobacter marburgensis (strain ATCC BAA-927 / DSM 2133 / JCM 14651 / NBRC 100331 / OCM 82 / Marburg) (Methanobacterium thermoautotrophicum)).